The following is a 237-amino-acid chain: LexA repressor (237 aa).

A DNA-binding region (H-T-H motif) is located at residues 26–46 (FDEMKDALGLKSKSGIHRLIT). Active-site for autocatalytic cleavage activity residues include Ser158 and Lys196.

It belongs to the peptidase S24 family. In terms of assembly, homodimer.

It catalyses the reaction Hydrolysis of Ala-|-Gly bond in repressor LexA.. Its function is as follows. Represses a number of genes involved in the response to DNA damage (SOS response), including recA and lexA. In the presence of single-stranded DNA, RecA interacts with LexA causing an autocatalytic cleavage which disrupts the DNA-binding part of LexA, leading to derepression of the SOS regulon and eventually DNA repair. The polypeptide is LexA repressor (Rhodospirillum centenum (strain ATCC 51521 / SW)).